Here is a 471-residue protein sequence, read N- to C-terminus: 3-isopropylmalate dehydratase large subunit (471 aa).

Positions 347, 407, and 410 each coordinate [4Fe-4S] cluster.

Belongs to the aconitase/IPM isomerase family. LeuC type 1 subfamily. As to quaternary structure, heterodimer of LeuC and LeuD. The cofactor is [4Fe-4S] cluster.

It catalyses the reaction (2R,3S)-3-isopropylmalate = (2S)-2-isopropylmalate. It functions in the pathway amino-acid biosynthesis; L-leucine biosynthesis; L-leucine from 3-methyl-2-oxobutanoate: step 2/4. Functionally, catalyzes the isomerization between 2-isopropylmalate and 3-isopropylmalate, via the formation of 2-isopropylmaleate. This is 3-isopropylmalate dehydratase large subunit from Geobacillus thermodenitrificans (strain NG80-2).